Reading from the N-terminus, the 97-residue chain is MAESAASITRHLRIHGLVQGVYYRKSMTEAARRLGVQGWVRNRQDGTVEALASGAAPAVQALIDWAHEGPPAARVERVEVAEAPACDAQGFEQRETV.

One can recognise an Acylphosphatase-like domain in the interval 9-95 (TRHLRIHGLV…CDAQGFEQRE (87 aa)). Catalysis depends on residues Arg-24 and Asn-42.

It belongs to the acylphosphatase family.

The enzyme catalyses an acyl phosphate + H2O = a carboxylate + phosphate + H(+). This is Acylphosphatase (acyP) from Acidovorax sp. (strain JS42).